A 110-amino-acid polypeptide reads, in one-letter code: Large ribosomal subunit protein uL22 (110 aa).

A compositionally biased stretch (basic residues) spans 85-95 (RGTASKIRKPT). The segment at 85 to 110 (RGTASKIRKPTSHVMVEVSKAQKKEA) is disordered.

It belongs to the universal ribosomal protein uL22 family. As to quaternary structure, part of the 50S ribosomal subunit.

Functionally, this protein binds specifically to 23S rRNA; its binding is stimulated by other ribosomal proteins, e.g. L4, L17, and L20. It is important during the early stages of 50S assembly. It makes multiple contacts with different domains of the 23S rRNA in the assembled 50S subunit and ribosome. Its function is as follows. The globular domain of the protein is located near the polypeptide exit tunnel on the outside of the subunit, while an extended beta-hairpin is found that lines the wall of the exit tunnel in the center of the 70S ribosome. The polypeptide is Large ribosomal subunit protein uL22 (Campylobacter curvus (strain 525.92)).